We begin with the raw amino-acid sequence, 310 residues long: Ribosomal protein uL3 glutamine methyltransferase (310 aa).

It belongs to the protein N5-glutamine methyltransferase family. PrmB subfamily.

It carries out the reaction L-glutaminyl-[ribosomal protein uL3] + S-adenosyl-L-methionine = N(5)-methyl-L-glutaminyl-[ribosomal protein uL3] + S-adenosyl-L-homocysteine + H(+). Methylates large ribosomal subunit protein uL3 on a specific glutamine residue. The sequence is that of Ribosomal protein uL3 glutamine methyltransferase from Yersinia pestis.